A 66-amino-acid polypeptide reads, in one-letter code: Large ribosomal subunit protein bL35 (66 aa).

Residues 1–16 (MPKQKTHRASAKRFKR) are compositionally biased toward basic residues. Residues 1 to 20 (MPKQKTHRASAKRFKRTGSG) form a disordered region.

The protein belongs to the bacterial ribosomal protein bL35 family.

The chain is Large ribosomal subunit protein bL35 from Streptococcus thermophilus (strain CNRZ 1066).